We begin with the raw amino-acid sequence, 1462 residues long: Glucosyltransferase-S (1462 aa).

Residues 35-164 are disordered; the sequence is SSVSAETEQQ…RQTAAQENKN (130 aa). Polar residues predominate over residues 37–52; the sequence is VSAETEQQTSDKVVTQ. Low complexity predominate over residues 71–85; the sequence is TKQAQTEQTQAQSQA. The segment covering 86–108 has biased composition (polar residues); sequence NVADTSTSITKETPSQNITTQAN. The segment covering 109-133 has biased composition (basic and acidic residues); that stretch reads SDDKTVTNTKSEEAQTSEERTKQAE. Over residues 134–149 the composition is skewed to low complexity; the sequence is EAQATASSQALTQAKA. The segment covering 154–163 has biased composition (polar residues); sequence QRQTAAQENK. 14 Cell wall-binding repeats span residues 171 to 190, 192 to 211, 1095 to 1115, 1116 to 1136, 1137 to 1156, 1180 to 1201, 1202 to 1221, 1223 to 1244, 1246 to 1266, 1267 to 1286, 1310 to 1330, 1331 to 1350, 1352 to 1372, and 1374 to 1394; these read IPNV…DGQP, KNFA…NTGA, STGF…GYQA, KNSF…NGHM, VYGL…NGVQ, SNGY…SGVM, AVGL…DGYQ, KGAW…SGNM, VNRF…DGIA, LVGV…DGKQ, RNIF…DGVA, VTGS…DGKQ, KGSF…SGEL, and VNRF…NGEA.

The protein belongs to the glycosyl hydrolase 70 family.

It localises to the secreted. It catalyses the reaction [(1-&gt;6)-alpha-D-glucosyl](n) + sucrose = [(1-&gt;6)-alpha-D-glucosyl](n+1) + D-fructose. Functionally, production of extracellular glucans, that are thought to play a key role in the development of the dental plaque because of their ability to adhere to smooth surfaces and mediate the aggregation of bacterial cells and food debris. The polypeptide is Glucosyltransferase-S (gtfD) (Streptococcus mutans serotype c (strain ATCC 700610 / UA159)).